We begin with the raw amino-acid sequence, 774 residues long: Cilium assembly protein DZIP1L (774 aa).

The C2H2-type zinc finger occupies 166–189 (HTCHLCDKTFMNATFLRGHIQRRH). Residues 204-450 (LGEVLEELRA…RKVLAALRKN (247 aa)) adopt a coiled-coil conformation. Disordered regions lie at residues 415–435 (MPKA…ASLE), 515–674 (NKEV…ASSG), and 686–774 (KQLE…IPGW). The segment covering 421-433 (TEEDSSEEELEAS) has biased composition (acidic residues). Residues Ser425 and Ser426 each carry the phosphoserine modification. Positions 515-526 (NKEVSSRVKQRW) are enriched in basic and acidic residues. Residues 597-616 (GPSSTPVSPGSGLSSTPPFS) show a composition bias toward low complexity.

Belongs to the DZIP C2H2-type zinc-finger protein family. In terms of assembly, interacts with SEPTIN2.

The protein resides in the cytoplasm. The protein localises to the cytoskeleton. Its subcellular location is the cilium basal body. It is found in the microtubule organizing center. It localises to the centrosome. The protein resides in the centriole. In terms of biological role, involved in primary cilium formation. Probably acts as a transition zone protein required for localization of PKD1/PC1 and PKD2/PC2 to the ciliary membrane. This is Cilium assembly protein DZIP1L from Mus musculus (Mouse).